A 172-amino-acid polypeptide reads, in one-letter code: Adenine phosphoribosyltransferase (172 aa).

This sequence belongs to the purine/pyrimidine phosphoribosyltransferase family. In terms of assembly, homodimer.

It localises to the cytoplasm. It carries out the reaction AMP + diphosphate = 5-phospho-alpha-D-ribose 1-diphosphate + adenine. It participates in purine metabolism; AMP biosynthesis via salvage pathway; AMP from adenine: step 1/1. In terms of biological role, catalyzes a salvage reaction resulting in the formation of AMP, that is energically less costly than de novo synthesis. The chain is Adenine phosphoribosyltransferase from Nostoc punctiforme (strain ATCC 29133 / PCC 73102).